The following is a 207-amino-acid chain: Na(+)-translocating NADH-quinone reductase subunit D (207 aa).

A run of 6 helical transmembrane segments spans residues isoleucine 20–alanine 40, phenylalanine 41–isoleucine 61, isoleucine 69–leucine 89, valine 102–methionine 122, phenylalanine 130–leucine 150, and asparagine 177–isoleucine 197.

It belongs to the NqrDE/RnfAE family. As to quaternary structure, composed of six subunits; NqrA, NqrB, NqrC, NqrD, NqrE and NqrF.

The protein localises to the cell inner membrane. It carries out the reaction a ubiquinone + n Na(+)(in) + NADH + H(+) = a ubiquinol + n Na(+)(out) + NAD(+). NQR complex catalyzes the reduction of ubiquinone-1 to ubiquinol by two successive reactions, coupled with the transport of Na(+) ions from the cytoplasm to the periplasm. NqrA to NqrE are probably involved in the second step, the conversion of ubisemiquinone to ubiquinol. This Haemophilus ducreyi (strain 35000HP / ATCC 700724) protein is Na(+)-translocating NADH-quinone reductase subunit D.